Reading from the N-terminus, the 330-residue chain is Low affinity immunoglobulin gamma Fc region receptor II (330 aa).

Residues 1 to 29 (MESNWTVHVFSRTLCHMLLWTAVLNLAAG) form the signal peptide. Residues 30-210 (THDLPKAVVK…QGPKSSRSLP (181 aa)) are Extracellular-facing. 2 consecutive Ig-like C2-type domains span residues 50–106 (EDTV…QTRL) and 131–189 (GETI…LGRT). 2 disulfide bridges follow: Cys57–Cys99 and Cys138–Cys182. N-linked (GlcNAc...) asparagine glycans are attached at residues Asn65, Asn92, Asn166, and Asn173. Residues 211–231 (VLTIVAAVTGIAVAAIVIILV) traverse the membrane as a helical segment. Residues 232 to 330 (SLVYLKKKQV…ETEHDYQNHI (99 aa)) are Cytoplasmic-facing. A disordered region spans residues 261–330 (VGEYRQPSGG…ETEHDYQNHI (70 aa)). Tyr290 bears the Phosphotyrosine mark. Residues 307-312 (ITYSLL) carry the ITIM motif motif. A Phosphotyrosine; by SRC-type Tyr-kinases modification is found at Tyr309. Tyr326 carries the post-translational modification Phosphotyrosine.

As to quaternary structure, interacts with FGR. Interacts with LYN. In terms of processing, glycosylated. Post-translationally, when coaggregated to BCR, isoform IIB1 and isoform IIB1' become tyrosine phosphorylated and bind to the SH2 domains of the protein tyrosine phosphatase PTPC1. Phosphorylated by SRC-type Tyr-kinases such as LYN, BLK, FYN and SYK. Widely expressed by cells of hemopoietic origin. The isoforms are differentially expressed. Isoform IIB1 is preferentially expressed by cells of the lymphoid lineage, isoform IIB2 by cells of the myeloid lineage, and isoform IIB3 is released by macrophages and is present in the serum. Isoform IIB1' is expressed in myeloid and lymphoid cell lines, in normal spleen cells, and in resting or LPS-activated B-cells but is not detected in mesenteric lymph node cells.

The protein resides in the cell membrane. The protein localises to the cytoplasm. It localises to the cytoskeleton. Its subcellular location is the secreted. Its function is as follows. Receptor for the Fc region of complexed immunoglobulins gamma. Low affinity receptor. Involved in a variety of effector and regulatory functions such as phagocytosis of antigen-antibody complexes from the circulation and modulation of antibody production by B-cells. Isoform IIB1 and isoform IIB1' form caps but fail to mediate endocytosis or phagocytosis. Isoform IIB2 can mediate the endocytosis of soluble immune complexes via clathrin-coated pits. Isoform IIB1 and isoform IIB2 can down-regulate B-cell, T-cell, and mast cell activation when coaggregated to B-cell receptors for AG (BCR), T-cell receptors for AG (TCR), and Fc receptors, respectively. The polypeptide is Low affinity immunoglobulin gamma Fc region receptor II (Fcgr2) (Mus musculus (Mouse)).